A 431-amino-acid polypeptide reads, in one-letter code: Dihydroorotase (431 aa).

H59 and H61 together coordinate Zn(2+). Residues 61–63 (HLR) and N93 contribute to the substrate site. Zn(2+)-binding residues include D151, H178, H231, and D304. The active site involves D304. Substrate contacts are provided by residues H308 and 322-323 (FG).

This sequence belongs to the metallo-dependent hydrolases superfamily. DHOase family. Class I DHOase subfamily. Requires Zn(2+) as cofactor.

It catalyses the reaction (S)-dihydroorotate + H2O = N-carbamoyl-L-aspartate + H(+). The protein operates within pyrimidine metabolism; UMP biosynthesis via de novo pathway; (S)-dihydroorotate from bicarbonate: step 3/3. Functionally, catalyzes the reversible cyclization of carbamoyl aspartate to dihydroorotate. This chain is Dihydroorotase, found in Thermoanaerobacter sp. (strain X514).